A 92-amino-acid polypeptide reads, in one-letter code: Phospholemman (92 aa).

An N-terminal signal peptide occupies residues Met1–Ala20. Over Glu21–Ser35 the chain is Extracellular. Residues Leu36–Leu56 form a helical membrane-spanning segment. Topologically, residues Ser57–Arg92 are cytoplasmic. Cys60 is lipidated: S-palmitoyl cysteine. S-glutathionyl cysteine; alternate is present on Cys62. The S-palmitoyl cysteine; alternate moiety is linked to residue Cys62. The disordered stretch occupies residues Asn65–Arg92. Position 79 is a phosphothreonine (Thr79). Ser82 is modified (phosphoserine). Phosphoserine; by PKA and PKC is present on Ser83. Basic residues predominate over residues Ser83–Arg92. Ser88 is subject to Phosphoserine; by PKA. Residue Thr89 is modified to Phosphothreonine; by PKC.

The protein belongs to the FXYD family. Homotetramer. Monomer. Regulatory subunit of the sodium/potassium-transporting ATPase (NKA) which is composed of a catalytic alpha subunit, an auxiliary non-catalytic beta subunit and an additional regulatory subunit. The monomeric form associates with NKA while the oligomeric form does not. Interacts with the catalytic alpha-1 subunit ATP1A1. Also interacts with the catalytic alpha-2 and alpha-3 subunits ATP1A2 and ATP1A3. Very little interaction with ATP1A1, ATP1A2 or ATP1A3 when phosphorylated at Ser-83. Interacts with the non-catalytic beta-1 subunit ATP1B1. Oxidative stress decreases interaction with ATP1A1 but increases interaction with ATP1B1. Post-translationally, major plasma membrane substrate for cAMP-dependent protein kinase (PKA) and protein kinase C (PKC) in several different tissues. Phosphorylated in response to insulin and adrenergic stimulation. Phosphorylation at Ser-88 stimulates sodium/potassium-transporting ATPase activity while the unphosphorylated form inhibits sodium/potassium-transporting ATPase activity. Phosphorylation increases tetramerization, decreases binding to ATP1A1 and reduces inhibition of ATP1A1 activity. Phosphorylation at Ser-83 leads to greatly reduced interaction with ATP1A1, ATP1A2 and ATP1A3. May be phosphorylated by DMPK. In terms of processing, palmitoylation increases half-life and stability and is enhanced upon phosphorylation at Ser-88 by PKA. In terms of tissue distribution, highest expression in skeletal muscle and heart. Moderate levels in brain, placenta, lung, liver, pancreas, uterus, bladder, prostate, small intestine and colon with mucosal lining. Very low levels in kidney, colon and small intestine without mucosa, prostate without endothelial lining, spleen, and testis.

It localises to the cell membrane. It is found in the sarcolemma. The protein resides in the apical cell membrane. The protein localises to the membrane. Its subcellular location is the caveola. It localises to the T-tubule. Functionally, associates with and regulates the activity of the sodium/potassium-transporting ATPase (NKA) which transports Na(+) out of the cell and K(+) into the cell. Inhibits NKA activity in its unphosphorylated state and stimulates activity when phosphorylated. Reduces glutathionylation of the NKA beta-1 subunit ATP1B1, thus reversing glutathionylation-mediated inhibition of ATP1B1. Contributes to female sexual development by maintaining the excitability of neurons which secrete gonadotropin-releasing hormone. In Homo sapiens (Human), this protein is Phospholemman.